The chain runs to 310 residues: Bacteriochlorophyll synthase 34 kDa chain (310 aa).

Residues 1 to 13 are compositionally biased toward polar residues; sequence MSDMSDQTRLSSP. A disordered region spans residues 1–20; the sequence is MSDMSDQTRLSSPPSLPLHK. 8 consecutive transmembrane segments (helical) span residues 39 to 59, 67 to 87, 112 to 132, 134 to 154, 166 to 186, 187 to 207, 248 to 268, and 287 to 307; these read VTWFAPTWAFMCGAIASGALG, LLLGMFMAGPILCGLSQVVND, HVYILTAVLTWIGASIALFLG, QVAFFVALGLVFALAYSLRPI, LVAISYEGLAWMAGHAAFAPL, TGESVTIALLYSLGAHGIMTV, VIGLLFHWGHPVAATVVAILL, and VFFNATAIMLYVWGMLAAAIG.

It localises to the cell membrane. It functions in the pathway porphyrin-containing compound metabolism; bacteriochlorophyll biosynthesis (light-independent). Catalyzes the esterification of bacteriochlorophyllide a by geranylgeraniol-PPi. In Chloroflexus aurantiacus (strain ATCC 29366 / DSM 635 / J-10-fl), this protein is Bacteriochlorophyll synthase 34 kDa chain (bchG).